We begin with the raw amino-acid sequence, 335 residues long: 34 kDa spicule matrix protein (335 aa).

A signal peptide spans 1–17 (MKGLLLILASLVAIATG). The 166-residue stretch at 29 to 194 (SGASCYRYFN…ATAMRAFVCE (166 aa)) folds into the C-type lectin domain. Cysteine 50 and cysteine 193 are disulfide-bonded. The interval 199-335 (QNIPPGQQPG…QEAETDVTGS (137 aa)) is disordered. Over residues 207–310 (PGFGGQQPGF…GGPQRPGMGG (104 aa)) the composition is skewed to gly residues. Residues 311–323 (QPNSPNPRFNRPR) are compositionally biased toward low complexity.

It belongs to the SM50 family. Embryo spicule.

Its subcellular location is the secreted. Its function is as follows. Major matrix protein of the sea urchin embryo spicule which directs crystal growth in certain orientations and inhibit growth in others. This chain is 34 kDa spicule matrix protein, found in Lytechinus pictus (Painted sea urchin).